Reading from the N-terminus, the 307-residue chain is tRNA pseudouridine synthase B (307 aa).

Catalysis depends on Asp38, which acts as the Nucleophile.

This sequence belongs to the pseudouridine synthase TruB family. Type 1 subfamily.

It catalyses the reaction uridine(55) in tRNA = pseudouridine(55) in tRNA. Responsible for synthesis of pseudouridine from uracil-55 in the psi GC loop of transfer RNAs. This chain is tRNA pseudouridine synthase B, found in Bacillus cytotoxicus (strain DSM 22905 / CIP 110041 / 391-98 / NVH 391-98).